Consider the following 497-residue polypeptide: WASH complex subunit homolog 1 (497 aa).

A disordered region spans residues 306-497 (EASEPTEAEA…PPNFDDEEWD (192 aa)). Positions 323–339 (LPPPPPPMKLDPSPQPA) are enriched in pro residues. Over residues 341 to 350 (TPVEITEIPP) the composition is skewed to low complexity. The span at 351–372 (IISPPAPPPPPPPPPPPPPPQT) shows a compositional bias: pro residues. The region spanning 390–412 (GRSDLMAAIRAAGGAGNAKLSRI) is the WH2 domain.

This sequence belongs to the WASH1 family. Component of the WASH core complex. Component of the DHIC (ddl-1-containing hsf-1 inhibitory) complex, which contains at least ddl-1, ddl-2, hsb-1 and hsf-1. Within the complex, interacts with ddl-1. Formation of the DHIC may be dependent upon the Insulin/IGF-1-like signaling (IIS) mediated pathway. Expressed in several neurons located throughout the body.

In terms of biological role, acts as a component of the WASH core complex that functions as a nucleation-promoting factor (NPF) at the surface of endosomes, where it recruits and activates the Arp2/3 complex to induce actin polymerization, playing a key role in the fission of tubules that serve as transport intermediates during endosome sorting. Acts as a component of the DHIC (ddl-1-containing hsf-1 inhibitory complex) which modulates lifespan by sequestering the heat shock transcription factor hsf-1 to negatively regulate its binding to DNA and its transcriptional activity. This chain is WASH complex subunit homolog 1, found in Caenorhabditis elegans.